The following is a 195-amino-acid chain: Peroxiredoxin (195 aa).

The Thioredoxin domain occupies 4–162 (AMIGKPAPEF…TLRLVQAFQF (159 aa)). The Cysteine sulfenic acid (-SOH) intermediate role is filled by C49.

It belongs to the peroxiredoxin family. AhpC/Prx1 subfamily. In terms of assembly, homodimer; disulfide-linked, upon oxidation.

It carries out the reaction a hydroperoxide + [thioredoxin]-dithiol = an alcohol + [thioredoxin]-disulfide + H2O. In terms of biological role, thiol-specific peroxidase that catalyzes the reduction of hydrogen peroxide and organic hydroperoxides to water and alcohols, respectively. Plays a role in cell protection against oxidative stress by detoxifying peroxides and as sensor of hydrogen peroxide-mediated signaling events. In Ascaris suum (Pig roundworm), this protein is Peroxiredoxin.